Consider the following 189-residue polypeptide: Molybdopterin synthase catalytic subunit (189 aa).

Over residues 1–30 (MSSLEISNSCFSPETRSPSSRQSVEDNASE) the composition is skewed to polar residues. Positions 1-41 (MSSLEISNSCFSPETRSPSSRQSVEDNASEPSGKDVDDVQE) are disordered. Ser20 bears the Phosphoserine mark. A compositionally biased stretch (basic and acidic residues) spans 32–41 (SGKDVDDVQE). Substrate is bound by residues 143-144 (HR), Lys159, and 166-168 (KKE).

Belongs to the MoaE family. MOCS2B subfamily. Heterotetramer; composed of 2 small (MOCS2A) and 2 large (MOCS2B) subunits.

The protein localises to the cytoplasm. Its subcellular location is the cytosol. The enzyme catalyses 2 [molybdopterin-synthase sulfur-carrier protein]-C-terminal-Gly-aminoethanethioate + cyclic pyranopterin phosphate + H2O = molybdopterin + 2 [molybdopterin-synthase sulfur-carrier protein]-C-terminal Gly-Gly + 2 H(+). It participates in cofactor biosynthesis; molybdopterin biosynthesis. In terms of biological role, catalytic subunit of the molybdopterin synthase complex, a complex that catalyzes the conversion of precursor Z into molybdopterin. Acts by mediating the incorporation of 2 sulfur atoms from thiocarboxylated MOCS2A into precursor Z to generate a dithiolene group. The sequence is that of Molybdopterin synthase catalytic subunit from Mus musculus (Mouse).